Reading from the N-terminus, the 95-residue chain is Small ribosomal subunit protein bS6 (95 aa).

Belongs to the bacterial ribosomal protein bS6 family.

In terms of biological role, binds together with bS18 to 16S ribosomal RNA. This Oceanobacillus iheyensis (strain DSM 14371 / CIP 107618 / JCM 11309 / KCTC 3954 / HTE831) protein is Small ribosomal subunit protein bS6.